We begin with the raw amino-acid sequence, 270 residues long: NAD(P)H-hydrate epimerase (270 aa).

Positions 25-234 (FQQLMDLMQN…DLLAPEAIYQ (210 aa)) constitute a YjeF N-terminal domain. A (6S)-NADPHX-binding site is contributed by 73-77 (DNGGQ). Positions 74 and 144 each coordinate K(+). (6S)-NADPHX is bound by residues 148-154 (GVGLYGH) and Glu177. Thr180 contributes to the K(+) binding site.

This sequence belongs to the NnrE/AIBP family. The cofactor is K(+).

The catalysed reaction is (6R)-NADHX = (6S)-NADHX. The enzyme catalyses (6R)-NADPHX = (6S)-NADPHX. Catalyzes the epimerization of the S- and R-forms of NAD(P)HX, a damaged form of NAD(P)H that is a result of enzymatic or heat-dependent hydration. This is a prerequisite for the S-specific NAD(P)H-hydrate dehydratase to allow the repair of both epimers of NAD(P)HX. The chain is NAD(P)H-hydrate epimerase from Legionella pneumophila serogroup 1 (strain 2300/99 Alcoy).